The sequence spans 197 residues: Ubiquitin-conjugating enzyme E2 T (197 aa).

Residues 2–152 form the UBC core domain; it reads QRASRLKREL…ARQWTEKHAR (151 aa). The active-site Glycyl thioester intermediate is the Cys-86. Residues Lys-91 and Lys-182 each participate in a glycyl lysine isopeptide (Lys-Gly) (interchain with G-Cter in ubiquitin) cross-link. The segment at 149–197 is disordered; sequence KHARQKQKADEEEMLDNLPEAGDSRVHNSTQKRKASQLVGIEKKFHPDV. Phosphoserine is present on Ser-184. Residues Lys-191 and Lys-192 each participate in a glycyl lysine isopeptide (Lys-Gly) (interchain with G-Cter in SUMO2) cross-link.

It belongs to the ubiquitin-conjugating enzyme family. Directly interacts with FANCL. Interacts with BRCA1. Auto-ubiquitinated. Effects of auto-monoubiquitination at Lys-91 and Lys-182 are unclear: according to a report, monoubiquitination inactivates E2 enzyme activity. In contrast, according to another report, autoubiquitination does not affect E2 enzyme activity.

The protein localises to the nucleus. The catalysed reaction is S-ubiquitinyl-[E1 ubiquitin-activating enzyme]-L-cysteine + [E2 ubiquitin-conjugating enzyme]-L-cysteine = [E1 ubiquitin-activating enzyme]-L-cysteine + S-ubiquitinyl-[E2 ubiquitin-conjugating enzyme]-L-cysteine.. It participates in protein modification; protein ubiquitination. Accepts ubiquitin from the E1 complex and catalyzes its covalent attachment to other proteins. Catalyzes monoubiquitination. Involved in mitomycin-C (MMC)-induced DNA repair. Acts as a specific E2 ubiquitin-conjugating enzyme for the Fanconi anemia complex by associating with E3 ubiquitin-protein ligase FANCL and catalyzing monoubiquitination of FANCD2, a key step in the DNA damage pathway. Also mediates monoubiquitination of FANCL and FANCI. May contribute to ubiquitination and degradation of BRCA1. In vitro able to promote polyubiquitination using all 7 ubiquitin Lys residues, but may prefer 'Lys-11'-, 'Lys-27'-, 'Lys-48'- and 'Lys-63'-linked polyubiquitination. This is Ubiquitin-conjugating enzyme E2 T (UBE2T) from Homo sapiens (Human).